We begin with the raw amino-acid sequence, 113 residues long: Pro-FMRFamide-related neuropeptide FF (113 aa).

The N-terminal stretch at 1 to 20 (MDSRQAAALLVLLLLIDGGC) is a signal peptide. The propeptide occupies 21–65 (AEGPGGQQEDQLSAEEDSEPLPPQDAQTSGSLLHYLLQAMERPGR). Residues 22–48 (EGPGGQQEDQLSAEEDSEPLPPQDAQT) are disordered. A Phenylalanine amide modification is found at F76. Residues 79–92 (NTQGSWRNEWLSPR) constitute a propeptide that is removed on maturation. Phenylalanine amide is present on F110.

This sequence belongs to the FARP (FMRFamide related peptide) family.

It is found in the secreted. Morphine modulating peptides. Have wide-ranging physiologic effects, including the modulation of morphine-induced analgesia, elevation of arterial blood pressure, and increased somatostatin secretion from the pancreas. Neuropeptide FF potentiates and sensitizes ASIC1 and ASIC3 channels. The chain is Pro-FMRFamide-related neuropeptide FF from Homo sapiens (Human).